The following is a 400-amino-acid chain: Argininosuccinate synthase (400 aa).

8-16 (AYSGGLDTS) is a binding site for ATP. L-citrulline is bound by residues Y87 and S92. Residue G117 participates in ATP binding. Positions 119, 123, and 124 each coordinate L-aspartate. Position 123 (N123) interacts with L-citrulline. L-citrulline is bound by residues R127, S175, E259, and Y271.

It belongs to the argininosuccinate synthase family. Type 1 subfamily. As to quaternary structure, homotetramer.

The protein localises to the cytoplasm. The enzyme catalyses L-citrulline + L-aspartate + ATP = 2-(N(omega)-L-arginino)succinate + AMP + diphosphate + H(+). It participates in amino-acid biosynthesis; L-arginine biosynthesis; L-arginine from L-ornithine and carbamoyl phosphate: step 2/3. The polypeptide is Argininosuccinate synthase (Frankia alni (strain DSM 45986 / CECT 9034 / ACN14a)).